A 329-amino-acid chain; its full sequence is Probable nicotianamine synthase 4 (329 aa).

This sequence belongs to the nicotianamine synthase (NAS)-like family.

The enzyme catalyses 3 S-adenosyl-L-methionine = nicotianamine + 3 S-methyl-5'-thioadenosine + 3 H(+). In terms of biological role, synthesizes nicotianamine, a polyamine that is the first intermediate in the synthesis of the phytosiderophores of the mugineic acid type found in gramineae which serves as a sensor for the physiological iron status within the plant, and/or might be involved in the transport of iron. This chain is Probable nicotianamine synthase 4 (NAS4), found in Hordeum vulgare (Barley).